The chain runs to 303 residues: E3 ubiquitin-protein ligase CHIP (303 aa).

Residues 1 to 10 (MKGKEEKEGG) are compositionally biased toward basic and acidic residues. The tract at residues 1–30 (MKGKEEKEGGARLGAGGGSPEKSPSAQELK) is disordered. Lysine 2 is covalently cross-linked (Glycyl lysine isopeptide (Lys-Gly) (interchain with G-Cter in ubiquitin)). A Phosphoserine modification is found at serine 19. Lysine 22 is covalently cross-linked (Glycyl lysine isopeptide (Lys-Gly) (interchain with G-Cter in ubiquitin)). A phosphoserine mark is found at serine 23 and serine 25. TPR repeat units follow at residues 26–59 (AQEL…NPLV), 60–93 (AVYY…DGQS), and 95–127 (KAHF…AKEQ). A required for interaction with MAPK7 region spans residues 101–200 (GQCQLEMESY…SHVRAQQACI (100 aa)). Residues 142–196 (AKKKRWNSIEERRIHQESELHSYLSRLIAAERERELEECQRNHEGDEDDSHVRAQ) form a required for interaction with and ubiquitination of MYOCD region. The segment at 143–197 (KKKRWNSIEERRIHQESELHSYLSRLIAAERERELEECQRNHEGDEDDSHVRAQQ) is required for interaction with FOXO1. Positions 143–303 (KKKRWNSIEE…ISENGWVEDY (161 aa)) are required for ubiquitination of FOXO1. The residue at position 149 (serine 149) is a Phosphoserine. Glycyl lysine isopeptide (Lys-Gly) (interchain with G-Cter in ubiquitin) cross-links involve residues lysine 221 and lysine 255. Residues 226 to 300 (DIPDYLCGKI…DAFISENGWV (75 aa)) form the U-box domain. A Phosphoserine modification is found at serine 273.

Homodimer. Interacts with BAG2. Interacts with E2 ubiquitin conjugating enzymes UBE2D1, UBE2D2 and UBE2D3. Detected in a ternary complex containing STUB1, HSPA1A and HSPBP1. Part of a complex composed of STUB1/CHIP, VCP/p97, CHRNA3, and UBXN2A that modulates the ubiquitination and endoplasmic reticulum-associated degradation (ERAD) of CHRNA3. Within the complex UBXN2A acts as a scaffold protein required for the interaction of CHRNA3 with VCP/p97, this interaction also inhibits CHRNA3 ubiquitination by STUB1/CHIP and subsequently ERAD. Interacts with MKKS. Interacts with DNAAF4. Interacts (when monoubiquitinated) with ATXN3. Interacts with UBE2W. Interacts (via the U-box domain) with the UBE2V2-UBE2N heterodimer; the complex has a specific 'Lys-63'-linked polyubiquitination activity. Interacts with DNAJB6. Interacts with FLCN. Interacts with HSP90AA1. Interacts with HSP90. Interacts with UBE2N and UBE2V1. Interacts (via TPR repeats) with HSPA8 (via C-terminus). Interacts (via TPR repeats) with HSPA1A (via C-terminus). Interacts with the non-acetylated form of HSPA1A and HSPA1B. Interacts with SMAD3 and HSP90AB1. Interacts with UBE4B. Interacts with PRMT5. Interacts with MYOCD (via C-terminus). Interacts with FOXO1 (when phosphorylated on 'Ser-256'). Interacts with MAPK7/ERK5; the interaction is enhanced in the presence of IGF1 or MAP2K5 and promotes STUB1/CHIP E3 ligase activity. Interacts with and ubiquitinates ESR1; the interaction is promoted in the absence of estradiol (17-beta-estradiol/E2). Interacts with ESR2. Interacts with and ubiquitinates NFATC3; HSPA1A/HSP70 is required as a co-chaperone. In macrophages, interacts with PAQR3; the interaction promotes PPARG poylubiquitination and STUB1-mediated degradation. Component of the chaperone-assisted selective autophagy (CASA) complex consisting of BAG3, HSPA8/HSC70, HSPB8 and STUB1/CHIP. Post-translationally, monoubiquitinated at Lys-2 following cell stress by UBE2W, promoting the interaction with ATXN3. Auto-ubiquitinated; mediated by UBE2D1 and UBE2D2 and enhanced in the presence of MAP2K5. In terms of tissue distribution, expressed in differentiated myotubes (at protein level). Highly expressed in skeletal muscle, heart, pancreas, brain and placenta. Detected in kidney, liver and lung.

It is found in the cytoplasm. The protein resides in the nucleus. Its subcellular location is the mitochondrion. The catalysed reaction is S-ubiquitinyl-[E2 ubiquitin-conjugating enzyme]-L-cysteine + [acceptor protein]-L-lysine = [E2 ubiquitin-conjugating enzyme]-L-cysteine + N(6)-ubiquitinyl-[acceptor protein]-L-lysine.. The protein operates within protein modification; protein ubiquitination. Its function is as follows. E3 ubiquitin-protein ligase which targets misfolded chaperone substrates towards proteasomal degradation. Plays a role in the maintenance of mitochondrial morphology and promotes mitophagic removal of dysfunctional mitochondria; thereby acts as a protector against apoptosis in response to cellular stress. Negatively regulates vascular smooth muscle contraction, via degradation of the transcriptional activator MYOCD and subsequent loss of transcription of genes involved in vascular smooth muscle contraction. Promotes survival and proliferation of cardiac smooth muscle cells via ubiquitination and degradation of FOXO1, resulting in subsequent repression of FOXO1-mediated transcription of pro-apoptotic genes. Ubiquitinates ICER-type isoforms of CREM and targets them for proteasomal degradation, thereby acts as a positive effector of MAPK/ERK-mediated inhibition of apoptosis in cardiomyocytes. Inhibits lipopolysaccharide-induced apoptosis and hypertrophy in cardiomyocytes, via ubiquitination and subsequent proteasomal degradation of NFATC3. Collaborates with ATXN3 in the degradation of misfolded chaperone substrates: ATXN3 restricting the length of ubiquitin chain attached to STUB1/CHIP substrates and preventing further chain extension. Ubiquitinates NOS1 in concert with Hsp70 and Hsp40. Modulates the activity of several chaperone complexes, including Hsp70, Hsc70 and Hsp90. Ubiquitinates CHRNA3 targeting it for endoplasmic reticulum-associated degradation in cortical neurons, as part of the STUB1-VCP-UBXN2A complex. Ubiquitinates and promotes ESR1 proteasomal degradation in response to age-related circulating estradiol (17-beta-estradiol/E2) decline, thereby promotes neuronal apoptosis in response to ischemic reperfusion injury. Mediates transfer of non-canonical short ubiquitin chains to HSPA8 that have no effect on HSPA8 degradation. Mediates polyubiquitination of DNA polymerase beta (POLB) at 'Lys-41', 'Lys-61' and 'Lys-81', thereby playing a role in base-excision repair: catalyzes polyubiquitination by amplifying the HUWE1/ARF-BP1-dependent monoubiquitination and leading to POLB-degradation by the proteasome. Mediates polyubiquitination of CYP3A4. Ubiquitinates EPHA2 and may regulate the receptor stability and activity through proteasomal degradation. Acts as a co-chaperone for HSPA1A and HSPA1B chaperone proteins and promotes ubiquitin-mediated protein degradation. Negatively regulates the suppressive function of regulatory T-cells (Treg) during inflammation by mediating the ubiquitination and degradation of FOXP3 in a HSPA1A/B-dependent manner. Catalyzes monoubiquitination of SIRT6, preventing its degradation by the proteasome. Likely mediates polyubiquitination and down-regulates plasma membrane expression of PD-L1/CD274, an immune inhibitory ligand critical for immune tolerance to self and antitumor immunity. Negatively regulates TGF-beta signaling by modulating the basal level of SMAD3 via ubiquitin-mediated degradation. Plays a role in the degradation of TP53. Mediates ubiquitination of RIPK3 leading to its subsequent proteasome-dependent degradation. May regulate myosin assembly in striated muscles together with UBE4B and VCP/p97 by targeting myosin chaperone UNC45B for proteasomal degradation. Ubiquitinates PPARG in macrophages playing a role in M2 macrophages polarization and angiogenesis. This chain is E3 ubiquitin-protein ligase CHIP, found in Homo sapiens (Human).